Here is a 382-residue protein sequence, read N- to C-terminus: Lycopene beta-cyclase (382 aa).

6–36 (DLILVGAGLANGLIALRLQQQQPDMRILLID) is an NAD(+) binding site.

It belongs to the lycopene cyclase family. FAD serves as cofactor.

It is found in the cell inner membrane. It carries out the reaction a carotenoid psi-end group = a carotenoid beta-end derivative. The enzyme catalyses all-trans-lycopene = gamma-carotene. It catalyses the reaction gamma-carotene = all-trans-beta-carotene. The catalysed reaction is all-trans-neurosporene = beta-zeacarotene. It carries out the reaction beta-zeacarotene = 7,8-dihydro-beta-carotene. It participates in carotenoid biosynthesis; beta-carotene biosynthesis. Activity is increased in the presence of NAD(P)H. NADPH is not involved directly in the cyclization reaction, but must play an indirect role, e.g. as an allosteric activator. Functionally, catalyzes the double cyclization reaction which converts lycopene to beta-carotene. Also catalyzes the double cyclization reaction which converts neurosporene to 7,8-dihydro-beta-carotene via monocyclic beta-zeacarotene. May also convert zeta-carotene to bicyclic 7,8,7',8'-tetrahydro-beta-carotene. The protein is Lycopene beta-cyclase of Pantoea ananas (Erwinia uredovora).